The following is a 258-amino-acid chain: 6-phosphogluconolactonase (258 aa).

Alanine 2 bears the N-acetylalanine mark. Phosphoserine is present on serine 49. The residue at position 180 (lysine 180) is an N6-acetyllysine.

It belongs to the glucosamine/galactosamine-6-phosphate isomerase family. 6-phosphogluconolactonase subfamily.

The protein resides in the cytoplasm. The catalysed reaction is 6-phospho-D-glucono-1,5-lactone + H2O = 6-phospho-D-gluconate + H(+). Its pathway is carbohydrate degradation; pentose phosphate pathway; D-ribulose 5-phosphate from D-glucose 6-phosphate (oxidative stage): step 2/3. Its function is as follows. Hydrolysis of 6-phosphogluconolactone to 6-phosphogluconate. The polypeptide is 6-phosphogluconolactonase (Homo sapiens (Human)).